The primary structure comprises 882 residues: Alanine--tRNA ligase (882 aa).

Zn(2+) is bound by residues histidine 570, histidine 574, cysteine 672, and histidine 676.

This sequence belongs to the class-II aminoacyl-tRNA synthetase family. The cofactor is Zn(2+).

The protein localises to the cytoplasm. The catalysed reaction is tRNA(Ala) + L-alanine + ATP = L-alanyl-tRNA(Ala) + AMP + diphosphate. Catalyzes the attachment of alanine to tRNA(Ala) in a two-step reaction: alanine is first activated by ATP to form Ala-AMP and then transferred to the acceptor end of tRNA(Ala). Also edits incorrectly charged Ser-tRNA(Ala) and Gly-tRNA(Ala) via its editing domain. The chain is Alanine--tRNA ligase from Xanthomonas oryzae pv. oryzae (strain MAFF 311018).